A 606-amino-acid polypeptide reads, in one-letter code: Probable methyltransferase PMT5 (606 aa).

Residues Met1–Arg20 lie on the Cytoplasmic side of the membrane. The helical; Signal-anchor for type II membrane protein transmembrane segment at Gly21 to Ser41 threads the bilayer. The Lumenal portion of the chain corresponds to Asn42–Lys606. Asn101 and Asn409 each carry an N-linked (GlcNAc...) asparagine glycan.

Belongs to the methyltransferase superfamily.

The protein resides in the endoplasmic reticulum membrane. The sequence is that of Probable methyltransferase PMT5 from Arabidopsis thaliana (Mouse-ear cress).